The primary structure comprises 318 residues: MEKVYIAGAIPEVGLNLLKEHFEVEMYEGEGIIDKATLMEGVKDASALISILSTNVDQEVIDSASNLKIIANYGAGFNNVDVKYAREKDIDVTNTPKASTASTAELTFGLVLAVARRIVEGDKLSRTQGFDGWAPLFFRGREVSGKTIGIIGLGEIGSAVAKRAKAFDMDILYTGPHQKKEKEREIGAKYVDLNTLLENADFITINAAYNPDLHHMIDTEQFKLMKSTAYLINAGRGPIVNEEALVKALEDKQIEGAALDVYEFEPEITEGLKSLDNVVITPHIGNATYEARDMMSKIVANDTIKKLNGETPQFIVNK.

Residues 155-156 (EI), 234-236 (AGR), and D260 each bind NAD(+). Residue R236 is part of the active site. Residue E265 is part of the active site. H283 acts as the Proton donor in catalysis. 283 to 286 (HIGN) is an NAD(+) binding site.

The protein belongs to the D-isomer specific 2-hydroxyacid dehydrogenase family.

This chain is Putative 2-hydroxyacid dehydrogenase SH0752, found in Staphylococcus haemolyticus (strain JCSC1435).